The chain runs to 204 residues: Glycerol-3-phosphate acyltransferase (204 aa).

5 helical membrane passes run 12 to 32 (LVMG…HWLA), 85 to 105 (WQVA…WLGW), 117 to 137 (MLLG…LTVL), 142 to 162 (IVSL…ILRF), and 163 to 183 (QGNS…MVVW).

It belongs to the PlsY family. Probably interacts with PlsX.

Its subcellular location is the cell inner membrane. It carries out the reaction an acyl phosphate + sn-glycerol 3-phosphate = a 1-acyl-sn-glycero-3-phosphate + phosphate. Its pathway is lipid metabolism; phospholipid metabolism. Functionally, catalyzes the transfer of an acyl group from acyl-phosphate (acyl-PO(4)) to glycerol-3-phosphate (G3P) to form lysophosphatidic acid (LPA). This enzyme utilizes acyl-phosphate as fatty acyl donor, but not acyl-CoA or acyl-ACP. The chain is Glycerol-3-phosphate acyltransferase from Prochlorococcus marinus (strain MIT 9313).